We begin with the raw amino-acid sequence, 629 residues long: MLITWLLDVLLLAPPVAAGYPPKPKNLITIESKALPGATITYKEVPKGVCGNVRSYSGYINFPPNSMREAPQDFPVHIYFWYFESQVKPETDPLAIYINGGPGAGSMVGVFVESGPCRMSEDAQSTVLNEHSWNKEANLLYIDQPVQTGFSYDVLTNATFDFKTNILSPEGPDHDPSKDGTLLAGTFGSGDPSKTANTTLNAARHMWNIVQVWSQDFSPYADNRENDKISLWSESYGGRYAPGFMAYFLQQNNRIKAGLLTGSVLHLDTVGIINGCVDLISQQKSNIDFPYNKNTYGIQAIDDAGYDKAMHAYGKRGGCLDQILECHALAKRYDPNAYGHVDEVNYVCERANSYCNTEVDGIYVDGAKRGLFDIAQCHLDPFPSNSFLGYLAKTEVQEALGVPANHTDPSYTVEHVFNVTGDYVRSDRGGHLLDIANLLDARVKVAMVYGDRDFICNWVGAENVSLSVDYKDAKNFRRAGYADVYTDDSGVPKAQVRQHGLFSFTRVYQAGHMMLAYQPQVGYEIFRRAMFNMDIATGTVTDDIEFYSTQGEVNSTHAEPPLPTVPPTCNFWGMAMSCAKNQIEAIQKGEASIVNNIIVSPTQARGECPTPQPTRKSWFYNNEQQSFII.

The first 18 residues, 1 to 18, serve as a signal peptide directing secretion; sequence MLITWLLDVLLLAPPVAA. N-linked (GlcNAc...) asparagine glycans are attached at residues asparagine 157 and asparagine 197. The active site involves serine 235. A disulfide bridge links cysteine 326 with cysteine 355. Residues asparagine 405 and asparagine 418 are each glycosylated (N-linked (GlcNAc...) asparagine). Aspartate 453 is an active-site residue. Cysteine 456 contributes to the substrate binding site. Asparagine 463 and asparagine 554 each carry an N-linked (GlcNAc...) asparagine glycan.

The protein belongs to the peptidase S10 family.

It is found in the secreted. The enzyme catalyses Release of a C-terminal amino acid with broad specificity.. Functionally, involved in degradation of small peptides. The chain is Carboxypeptidase Y homolog ARB_06361 from Arthroderma benhamiae (strain ATCC MYA-4681 / CBS 112371) (Trichophyton mentagrophytes).